The chain runs to 239 residues: Ribosomal RNA small subunit methyltransferase G (239 aa).

Residues Gly78, Phe83, 129-130 (AE), and Arg148 contribute to the S-adenosyl-L-methionine site.

The protein belongs to the methyltransferase superfamily. RNA methyltransferase RsmG family.

The protein localises to the cytoplasm. In terms of biological role, specifically methylates the N7 position of a guanine in 16S rRNA. The chain is Ribosomal RNA small subunit methyltransferase G from Clostridium botulinum (strain ATCC 19397 / Type A).